The sequence spans 87 residues: Phosphocarrier protein HPr (87 aa).

In terms of domain architecture, HPr spans 1 to 87 (MASKDFHIVA…AETMTKEGLA (87 aa)). The active-site Pros-phosphohistidine intermediate is His15. A Phosphoserine; by HPrK/P modification is found at Ser46.

This sequence belongs to the HPr family.

It is found in the cytoplasm. Its activity is regulated as follows. Phosphorylation on Ser-46 inhibits the phosphoryl transfer from enzyme I to HPr. Its function is as follows. General (non sugar-specific) component of the phosphoenolpyruvate-dependent sugar phosphotransferase system (sugar PTS). This major carbohydrate active-transport system catalyzes the phosphorylation of incoming sugar substrates concomitantly with their translocation across the cell membrane. The phosphoryl group from phosphoenolpyruvate (PEP) is transferred to the phosphoryl carrier protein HPr by enzyme I. Phospho-HPr then transfers it to the PTS EIIA domain. Functionally, P-Ser-HPr interacts with the catabolite control protein A (CcpA), forming a complex that binds to DNA at the catabolite response elements cre, operator sites preceding a large number of catabolite-regulated genes. Thus, P-Ser-HPr is a corepressor in carbon catabolite repression (CCR), a mechanism that allows bacteria to coordinate and optimize the utilization of available carbon sources. P-Ser-HPr also plays a role in inducer exclusion, in which it probably interacts with several non-PTS permeases and inhibits their transport activity. This chain is Phosphocarrier protein HPr (ptsH), found in Streptococcus salivarius.